Reading from the N-terminus, the 930-residue chain is G patch domain-containing protein TGH (930 aa).

Residue Lys-25 forms a Glycyl lysine isopeptide (Lys-Gly) (interchain with G-Cter in ubiquitin) linkage. Residues 76-152 are disordered; it reads GWAPQSFTSS…PSAIPGPVPD (77 aa). The G-patch domain maps to 159 to 199; the sequence is SESIGVKLLLKMGWRRGHSIKEVRASSDARREARKAFLAFY. Residues 405 to 447 form an SURP motif repeat; the sequence is LIEGFATFVSRCGKLYEDLSREKNQSNQLFDFLREGNGHDYYA. Disordered stretches follow at residues 478–508, 687–751, and 773–930; these read AETRGSLLGEKPLQRSLKETDTSASSGGSFQ, RQVS…NEAA, and FEVP…RRRD. The span at 489 to 498 shows a compositional bias: basic and acidic residues; the sequence is PLQRSLKETD. The span at 499–508 shows a compositional bias: polar residues; sequence TSASSGGSFQ. Residues 701–711 show a composition bias toward acidic residues; that stretch reads IEEPEVEVEVE. The span at 779–808 shows a compositional bias: basic and acidic residues; it reads EEIKSRSKPEDSSDKRLDRPGLKEKVEEKT. Positions 848–857 are enriched in basic residues; the sequence is RRKRYNKKDR. Basic and acidic residues predominate over residues 858 to 877; it reads HRNDSESDSSSDYHSRDKQG. Basic residues predominate over residues 892-908; it reads RSSHKKHSKHRRTKKSS. The segment covering 913–923 has biased composition (basic and acidic residues); it reads SSDEEQKESRR.

In terms of tissue distribution, expressed in vasculature of cotyledons and leaves, young meristematic tissues, trichomes and pistils.

It localises to the nucleus speckle. Its subcellular location is the nucleus. The protein resides in the nucleoplasm. In terms of biological role, functions as a component of microRNA (miRNA) and small interfering RNA (siRNA) biogenesis. May assist DCL1 and DCL4 to efficiently process and/or recruit the precursors of miRNAs and siRNAs. In the miRNA biogenesis pathway, associates with the DCL1 complex that processes primary miRNAs (pri-miRNAs) into miRNAs. Binds pri-miRNAs and precursor miRNAs (pre-miRNAs). Is required for the interaction between pri-miRNAs and DRB1. Required for general proper plant growth and, in particular, initiation of vascular development. Interacts genetically with AMP1, a glutamate carboxypeptidase involved in the regulation of meristem function. This Arabidopsis thaliana (Mouse-ear cress) protein is G patch domain-containing protein TGH.